Consider the following 157-residue polypeptide: Ribosome maturation factor RimP (157 aa).

The protein belongs to the RimP family.

It localises to the cytoplasm. Its function is as follows. Required for maturation of 30S ribosomal subunits. In Lactococcus lactis subsp. cremoris (strain MG1363), this protein is Ribosome maturation factor RimP.